Here is a 191-residue protein sequence, read N- to C-terminus: Vascular endothelial growth factor A (191 aa).

The N-terminal stretch at 1-26 is a signal peptide; the sequence is MNFLLTWIHWGLAALLYFHNAKVLQA. Disulfide bonds link Cys52-Cys94, Cys83-Cys128, and Cys87-Cys130. N-linked (GlcNAc...) asparagine glycosylation occurs at Asn101.

The protein belongs to the PDGF/VEGF growth factor family. As to quaternary structure, homodimer; disulfide-linked. Also found as heterodimer with PGF. As to expression, expressed by the venom gland, and probably other tissues.

It is found in the secreted. Growth factor active in angiogenesis, vasculogenesis and endothelial cell growth. Induces endothelial cell proliferation, promotes cell migration, inhibits apoptosis and induces permeabilization of blood vessels. Binds to heparan sulfate and heparin. The protein is Vascular endothelial growth factor A of Bitis gabonica (Gaboon adder).